The following is a 506-amino-acid chain: ATP synthase subunit alpha (506 aa).

Residue 170-177 participates in ATP binding; sequence GDRQTGKT.

It belongs to the ATPase alpha/beta chains family. In terms of assembly, F-type ATPases have 2 components, CF(1) - the catalytic core - and CF(0) - the membrane proton channel. CF(1) has five subunits: alpha(3), beta(3), gamma(1), delta(1), epsilon(1). CF(0) has four main subunits: a(1), b(1), b'(1) and c(9-12).

Its subcellular location is the cellular thylakoid membrane. It catalyses the reaction ATP + H2O + 4 H(+)(in) = ADP + phosphate + 5 H(+)(out). Its function is as follows. Produces ATP from ADP in the presence of a proton gradient across the membrane. The alpha chain is a regulatory subunit. This chain is ATP synthase subunit alpha, found in Synechococcus sp. (strain CC9902).